The sequence spans 495 residues: UDP-N-acetylmuramoyl-L-alanyl-D-glutamate--2,6-diaminopimelate ligase (495 aa).

Residues Leu-32 and Ser-34 each coordinate UDP-N-acetyl-alpha-D-muramoyl-L-alanyl-D-glutamate. Residue 119–125 (GTNGKTT) coordinates ATP. UDP-N-acetyl-alpha-D-muramoyl-L-alanyl-D-glutamate is bound by residues Asn-160, 161-162 (TT), Ser-188, Gln-194, and Arg-196. Lys-228 bears the N6-carboxylysine mark. Residues Arg-390, 414-417 (DNPR), Gly-465, and Glu-469 each bind meso-2,6-diaminopimelate. A Meso-diaminopimelate recognition motif motif is present at residues 414-417 (DNPR).

It belongs to the MurCDEF family. MurE subfamily. It depends on Mg(2+) as a cofactor. In terms of processing, carboxylation is probably crucial for Mg(2+) binding and, consequently, for the gamma-phosphate positioning of ATP.

Its subcellular location is the cytoplasm. It catalyses the reaction UDP-N-acetyl-alpha-D-muramoyl-L-alanyl-D-glutamate + meso-2,6-diaminopimelate + ATP = UDP-N-acetyl-alpha-D-muramoyl-L-alanyl-gamma-D-glutamyl-meso-2,6-diaminopimelate + ADP + phosphate + H(+). Its pathway is cell wall biogenesis; peptidoglycan biosynthesis. In terms of biological role, catalyzes the addition of meso-diaminopimelic acid to the nucleotide precursor UDP-N-acetylmuramoyl-L-alanyl-D-glutamate (UMAG) in the biosynthesis of bacterial cell-wall peptidoglycan. This Vibrio cholerae serotype O1 (strain ATCC 39315 / El Tor Inaba N16961) protein is UDP-N-acetylmuramoyl-L-alanyl-D-glutamate--2,6-diaminopimelate ligase.